The sequence spans 225 residues: Urease accessory protein UreF (225 aa).

Belongs to the UreF family. In terms of assembly, ureD, UreF and UreG form a complex that acts as a GTP-hydrolysis-dependent molecular chaperone, activating the urease apoprotein by helping to assemble the nickel containing metallocenter of UreC. The UreE protein probably delivers the nickel.

It is found in the cytoplasm. In terms of biological role, required for maturation of urease via the functional incorporation of the urease nickel metallocenter. In Arthrobacter sp. (strain FB24), this protein is Urease accessory protein UreF.